Reading from the N-terminus, the 258-residue chain is Tryptophan synthase alpha chain (258 aa).

Catalysis depends on proton acceptor residues Glu-44 and Asp-55.

This sequence belongs to the TrpA family. As to quaternary structure, tetramer of two alpha and two beta chains.

It catalyses the reaction (1S,2R)-1-C-(indol-3-yl)glycerol 3-phosphate + L-serine = D-glyceraldehyde 3-phosphate + L-tryptophan + H2O. The protein operates within amino-acid biosynthesis; L-tryptophan biosynthesis; L-tryptophan from chorismate: step 5/5. Functionally, the alpha subunit is responsible for the aldol cleavage of indoleglycerol phosphate to indole and glyceraldehyde 3-phosphate. This Petrotoga mobilis (strain DSM 10674 / SJ95) protein is Tryptophan synthase alpha chain.